We begin with the raw amino-acid sequence, 468 residues long: ATP synthase subunit beta (468 aa).

Residue 155–162 participates in ATP binding; the sequence is GGAGVGKT.

This sequence belongs to the ATPase alpha/beta chains family. As to quaternary structure, F-type ATPases have 2 components, CF(1) - the catalytic core - and CF(0) - the membrane proton channel. CF(1) has five subunits: alpha(3), beta(3), gamma(1), delta(1), epsilon(1). CF(0) has three main subunits: a(1), b(2) and c(9-12). The alpha and beta chains form an alternating ring which encloses part of the gamma chain. CF(1) is attached to CF(0) by a central stalk formed by the gamma and epsilon chains, while a peripheral stalk is formed by the delta and b chains.

It localises to the cell membrane. It carries out the reaction ATP + H2O + 4 H(+)(in) = ADP + phosphate + 5 H(+)(out). Its function is as follows. Produces ATP from ADP in the presence of a proton gradient across the membrane. The catalytic sites are hosted primarily by the beta subunits. This Streptococcus pyogenes serotype M5 (strain Manfredo) protein is ATP synthase subunit beta.